Here is a 367-residue protein sequence, read N- to C-terminus: DNA replication and repair protein RecF (367 aa).

G30 to T37 provides a ligand contact to ATP.

It belongs to the RecF family.

It localises to the cytoplasm. Its function is as follows. The RecF protein is involved in DNA metabolism; it is required for DNA replication and normal SOS inducibility. RecF binds preferentially to single-stranded, linear DNA. It also seems to bind ATP. The protein is DNA replication and repair protein RecF of Clostridium beijerinckii (strain ATCC 51743 / NCIMB 8052) (Clostridium acetobutylicum).